The chain runs to 404 residues: Glutamyl-tRNA reductase (404 aa).

Substrate is bound by residues 47–50, serine 94, 99–101, and glutamine 105; these read TCNR and EQE. Residue cysteine 48 is the Nucleophile of the active site. 174 to 179 is an NADP(+) binding site; sequence GAGEMG.

Homotetramer.

It catalyses the reaction (S)-4-amino-5-oxopentanoate + tRNA(Glu) + NADP(+) = L-glutamyl-tRNA(Glu) + NADPH + H(+). It participates in porphyrin-containing compound metabolism; protoporphyrin-IX biosynthesis; 5-aminolevulinate from L-glutamyl-tRNA(Glu): step 1/2. Its activity is regulated as follows. Inhibited by heavy metal compounds, Zn(2+), and heme. Also competitively inhibited by glutamycin. Catalyzes the NADPH-dependent reduction of glutamyl-tRNA(Glu) to glutamate 1-semialdehyde (GSA). In the absence of NADPH, exhibits substrate esterase activity, leading to the release of glutamate from tRNA. The polypeptide is Glutamyl-tRNA reductase (hemA) (Methanopyrus kandleri (strain AV19 / DSM 6324 / JCM 9639 / NBRC 100938)).